An 86-amino-acid chain; its full sequence is Probable weak neurotoxin NNAM2 (86 aa).

Positions 1–21 (MKTLLLTLVVVTIVCLDLGYT) are cleaved as a signal peptide. Cystine bridges form between C24–C45, C27–C32, C38–C63, C67–C78, and C79–C84.

It belongs to the three-finger toxin family. Ancestral subfamily. Orphan group II sub-subfamily. Expressed by the venom gland.

The protein resides in the secreted. Its function is as follows. Binds with low affinity to muscular (alpha-1-beta-1-delta-epsilon/CHRNA1-CHRNB1-CHRND-CHRNE) and very low affinity to neuronal (alpha-7/CHRNA7) nicotinic acetylcholine receptor (nAChR). This chain is Probable weak neurotoxin NNAM2, found in Naja atra (Chinese cobra).